The sequence spans 493 residues: Protein nucleotidyltransferase YdiU (493 aa).

8 residues coordinate ATP: G81, G83, R84, K103, D115, G116, R166, and R173. The active-site Proton acceptor is the D244. Mg(2+)-binding residues include N245 and D254. D254 contributes to the ATP binding site.

It belongs to the SELO family. Mg(2+) serves as cofactor. Requires Mn(2+) as cofactor.

It carries out the reaction L-seryl-[protein] + ATP = 3-O-(5'-adenylyl)-L-seryl-[protein] + diphosphate. The enzyme catalyses L-threonyl-[protein] + ATP = 3-O-(5'-adenylyl)-L-threonyl-[protein] + diphosphate. The catalysed reaction is L-tyrosyl-[protein] + ATP = O-(5'-adenylyl)-L-tyrosyl-[protein] + diphosphate. It catalyses the reaction L-histidyl-[protein] + UTP = N(tele)-(5'-uridylyl)-L-histidyl-[protein] + diphosphate. It carries out the reaction L-seryl-[protein] + UTP = O-(5'-uridylyl)-L-seryl-[protein] + diphosphate. The enzyme catalyses L-tyrosyl-[protein] + UTP = O-(5'-uridylyl)-L-tyrosyl-[protein] + diphosphate. In terms of biological role, nucleotidyltransferase involved in the post-translational modification of proteins. It can catalyze the addition of adenosine monophosphate (AMP) or uridine monophosphate (UMP) to a protein, resulting in modifications known as AMPylation and UMPylation. The sequence is that of Protein nucleotidyltransferase YdiU from Shewanella frigidimarina (strain NCIMB 400).